The primary structure comprises 87 residues: MSSISQNDLSNLDDGSKKEIMTFLESENSKQKVQMSIHQFTNLCFKNCISNVQNADLSSQEEQCLNNCVNRFLDTNIRIVKGLQSIQ.

Positions 44–68 (CFKNCISNVQNADLSSQEEQCLNNC) match the Twin CX3C motif motif. Intrachain disulfides connect C44–C68 and C48–C64.

It belongs to the small Tim family. As to quaternary structure, heterohexamer; composed of 3 copies of TIM8 and 3 copies of TIM13, named soluble 70 kDa complex. Associates with the TIM22 complex, whose core is composed of TIM22 and TIM54. Interacts with the transmembrane regions of multi-pass transmembrane proteins in transit.

The protein localises to the mitochondrion inner membrane. Its function is as follows. Mitochondrial intermembrane chaperone that participates in the import and insertion of some multi-pass transmembrane proteins into the mitochondrial inner membrane. Also required for the transfer of beta-barrel precursors from the TOM complex to the sorting and assembly machinery (SAM complex) of the outer membrane. Acts as a chaperone-like protein that protects the hydrophobic precursors from aggregation and guide them through the mitochondrial intermembrane space. The TIM8-TIM13 complex is non essential and only mediates the import of few proteins, while the predominant TIM9-TIM10 70 kDa complex is crucial and mediates the import of much more proteins. The polypeptide is Mitochondrial import inner membrane translocase subunit TIM8 (TIM8) (Kluyveromyces lactis (strain ATCC 8585 / CBS 2359 / DSM 70799 / NBRC 1267 / NRRL Y-1140 / WM37) (Yeast)).